We begin with the raw amino-acid sequence, 1135 residues long: Envelopment polyprotein (1135 aa).

The N-terminal stretch at 1–18 is a signal peptide; that stretch reads MGIWKWLVMASLVWPVLT. The Lumenal segment spans residues 19–485; it reads LRNVYDMKIE…VPGFHGWATA (467 aa). Disulfide bonds link Cys-29/Cys-151, Cys-63/Cys-157, Cys-109/Cys-128, Cys-133/Cys-138, Cys-175/Cys-185, Cys-210/Cys-247, Cys-234/Cys-351, Cys-376/Cys-435, Cys-380/Cys-389, Cys-405/Cys-424, and Cys-452/Cys-475. Asn-134 is a glycosylation site (N-linked (GlcNAc...) asparagine; by host). N-linked (GlcNAc...) asparagine; by host glycosylation is found at Asn-235 and Asn-347. The N-linked (GlcNAc...) asparagine; by host glycan is linked to Asn-399. Residues 486–506 traverse the membrane as a helical segment; sequence ALLVTFCFGWVLIPAITFIIL. At 507–627 the chain is on the cytoplasmic side; sequence TILKFIANIF…LNLFRYKSRC (121 aa). The tract at residues 516–533 is binding to the ribonucleoprotein; sequence FHTSNQENRLKSVLRKIK. 2 CCHC-type zinc fingers span residues 545–565 and 570–591; these read CDVC…GVSC and CPYC…YKVC. 3 binding to the ribonucleoprotein regions span residues 588–605, 592–603, and 611–625; these read YKVC…KKTV, QVTHRFRDDLKK, and TPGC…RYKS. The ITAM domain occupies 611 to 634; the sequence is TPGCYRTLNLFRYKSRCYIFTMWI. Residues 615-618 carry the YxxL motif; the sequence is YRTL. Residues 628–648 form a helical membrane-spanning segment; the sequence is YIFTMWIFLLVLESILWAASA. The Lumenal segment spans residues 649 to 1105; sequence SETPLTPVWN…EWISGIFSGN (457 aa). 8 disulfides stabilise this stretch: Cys-735–Cys-770, Cys-739–Cys-777, Cys-751–Cys-885, Cys-765–Cys-896, Cys-780–Cys-904, Cys-806–Cys-815, Cys-823–Cys-832, and Cys-863–Cys-867. A fusion loop region spans residues 757-777; it reads YQYETSWGCNPSDCPGVGTGC. Residue Asn-928 is glycosylated (N-linked (GlcNAc...) asparagine; by host). Cystine bridges form between Cys-970/Cys-1000, Cys-993/Cys-1045, Cys-1010/Cys-1015, Cys-1046/Cys-1051, and Cys-1085/Cys-1089. Residues 1106–1126 traverse the membrane as a helical segment; the sequence is WIVLIVLCVFLLFSLVLLSIL. Residues 1122–1135 form a binding to the ribonucleoprotein region; that stretch reads LLSILCPVRKHKKS. The Cytoplasmic segment spans residues 1127-1135; sequence CPVRKHKKS.

Belongs to the hantavirus envelope glycoprotein family. Homodimer. Homotetramer; forms heterotetrameric Gn-Gc spikes in the pre-fusion conformation. Interacts (via C-terminus) with the nucleoprotein. Interacts with host TUFM; this interaction contributes to the virus-induced degradation of mitochondria by autophagy, which leads to degradation of host MAVS and inhibition of type I interferon (IFN) responses. Interacts with host MAP1LC3B; this interaction contributes to the virus-induced degradation of mitochondria by autophagy, which leads to degradation of host MAVS and inhibition of type I interferon (IFN) responses. In terms of assembly, homodimer. Homotetramer; forms heterotetrameric Gn-Gc spikes in the pre-fusion conformation. Homotrimer; forms homotrimer in the post-fusion conformation at acidic pH. Interacts (via C-terminus) with the nucleoprotein. Envelope polyprotein precursor is quickly cleaved in vivo just after synthesis, presumably by host signal peptidase.

The protein resides in the virion membrane. It is found in the host cell surface. It localises to the host Golgi apparatus membrane. The protein localises to the host endoplasmic reticulum membrane. Its subcellular location is the host mitochondrion. Functionally, forms homotetramers with glycoprotein C at the surface of the virion. Attaches the virion to host cell receptors including integrin ITGAV/ITGB3. This attachment induces virion internalization predominantly through clathrin-dependent endocytosis. May also bind to host C1QBP for virus entry into the host cell. Mediates the assembly and budding of infectious virus particles through its interaction with the nucleocapsid protein and the viral genome. May dysregulate normal immune and endothelial cell responses through an ITAM motif. Translocates to mitochondria, binds to host TUFM and recruits MAP1LC3B. These interactions induce mitochondrial autophagy and therefore destruction of host MAVS leading to inhibition of type I interferon (IFN) responses. Concomitant breakdown of glycoprotein N is apparently prevented by the nucleoprotein that may inhibit Gn-stimulated autophagosome-lysosome fusion. Interacts with the viral genomic RNA. Forms homotetramers with glycoprotein N at the surface of the virion. Attaches the virion to host cell receptors including integrin ITGAV/ITGB3. This attachment induces virion internalization predominantly through clathrin-dependent endocytosis. May also bind to host C1QBP for virus entry into the host cell. Class II fusion protein that promotes fusion of viral membrane with host endosomal membrane after endocytosis of the virion. The polypeptide is Envelopment polyprotein (GP) (Hantaan virus (strain Lee) (Lee virus)).